The chain runs to 464 residues: MSAGKLPEGWVIAPVSTVTTLIRGVTYKKEQAINYLKDDYLPLIRANNIQNGKFDTTDLVFVPKNLVKESQKISPEDIVIAMSSGSKSVVGKSAHQHLPFECSFGAFCGVLRPEKLIFSGFIAHFTKSSLYRNKISSLSAGANINNIKPASFDLINIPIPPLAEQKIIAEKLDTLLAQVDSTKARFEQIPQILKRFRQAVLGGAVNGKLTEKWRNFEPQHSVFKKLNFESILTELRNGLSSKPNESGVGHPILRISSVRAGHVDQNDIRFLECSESELNRHKLQDGDLLFTRYNGSLEFVGVCGLLKKLQHQNLLYPDKLIRARLTKDALPEYIEIFFSSPSARNAMMNCVKTTSGQKGISGKDIKSQVVLLPPVKEQAEIVRRVEQLFAYADTIEKQVNNALARVNNLTQSILAKAFRGELTAQWRAENPDLISGENSAAALLEKIKAERAASGGKKASRKKS.

The protein belongs to the type-I restriction system S methylase family. In terms of assembly, the type I restriction/modification system is composed of three polypeptides R, M and S. The restriction enzyme has stoichiometry R(2)M(2)S(1). The methyltransferase is composed of M(2)S(1). (Microbial infection) Interacts with Escherichia phage T7 protein Ocr; this interaction leads to the inhibition of the methyltransferase restriction enzyme M.EcoKI composed of M(2)S(1).

The specificity (S) subunit of a type I restriction enzyme; this subunit dictates DNA sequence specificity. The M and S subunits together form a methyltransferase (MTase) that methylates A-2 on the top and A-3 on the bottom strand of the sequence 5'-AACN(6)GTGC-3'. In the presence of the R subunit the complex can also act as an endonuclease, binding to the same target sequence but cutting the DNA some distance from this site. Whether the DNA is cut or modified depends on the methylation state of the target sequence. When the target site is unmodified, the DNA is cut. When the target site is hemimethylated, the complex acts as a maintenance MTase modifying the DNA so that both strands become methylated. After locating a non-methylated recognition site, the enzyme complex serves as a molecular motor that translocates DNA in an ATP-dependent manner until a collision occurs that triggers cleavage. The polypeptide is Type I restriction enzyme EcoKI specificity subunit (Escherichia coli (strain K12)).